Reading from the N-terminus, the 279-residue chain is Bifunctional protein FolD (279 aa).

NADP(+) is bound by residues 165–167 (GRS), serine 190, and isoleucine 231.

This sequence belongs to the tetrahydrofolate dehydrogenase/cyclohydrolase family. In terms of assembly, homodimer.

The catalysed reaction is (6R)-5,10-methylene-5,6,7,8-tetrahydrofolate + NADP(+) = (6R)-5,10-methenyltetrahydrofolate + NADPH. It catalyses the reaction (6R)-5,10-methenyltetrahydrofolate + H2O = (6R)-10-formyltetrahydrofolate + H(+). It functions in the pathway one-carbon metabolism; tetrahydrofolate interconversion. Functionally, catalyzes the oxidation of 5,10-methylenetetrahydrofolate to 5,10-methenyltetrahydrofolate and then the hydrolysis of 5,10-methenyltetrahydrofolate to 10-formyltetrahydrofolate. The sequence is that of Bifunctional protein FolD from Halalkalibacterium halodurans (strain ATCC BAA-125 / DSM 18197 / FERM 7344 / JCM 9153 / C-125) (Bacillus halodurans).